The primary structure comprises 255 residues: Aliphatic sulfonates import ATP-binding protein SsuB (255 aa).

In terms of domain architecture, ABC transporter spans 12-233 (LLLNAVSKHY…RLGSVRLAEL (222 aa)). 44–51 (GRSGGGKS) contributes to the ATP binding site.

It belongs to the ABC transporter superfamily. Aliphatic sulfonates importer (TC 3.A.1.17.2) family. As to quaternary structure, the complex is composed of two ATP-binding proteins (SsuB), two transmembrane proteins (SsuC) and a solute-binding protein (SsuA).

It is found in the cell inner membrane. It carries out the reaction ATP + H2O + aliphatic sulfonate-[sulfonate-binding protein]Side 1 = ADP + phosphate + aliphatic sulfonateSide 2 + [sulfonate-binding protein]Side 1.. Part of the ABC transporter complex SsuABC involved in aliphatic sulfonates import. Responsible for energy coupling to the transport system. In Escherichia coli O1:K1 / APEC, this protein is Aliphatic sulfonates import ATP-binding protein SsuB.